The sequence spans 117 residues: Large ribosomal subunit protein uL22 (117 aa).

This sequence belongs to the universal ribosomal protein uL22 family. Part of the 50S ribosomal subunit.

This protein binds specifically to 23S rRNA; its binding is stimulated by other ribosomal proteins, e.g. L4, L17, and L20. It is important during the early stages of 50S assembly. It makes multiple contacts with different domains of the 23S rRNA in the assembled 50S subunit and ribosome. Its function is as follows. The globular domain of the protein is located near the polypeptide exit tunnel on the outside of the subunit, while an extended beta-hairpin is found that lines the wall of the exit tunnel in the center of the 70S ribosome. In Latilactobacillus sakei subsp. sakei (strain 23K) (Lactobacillus sakei subsp. sakei), this protein is Large ribosomal subunit protein uL22.